Consider the following 157-residue polypeptide: NAD(P)H-quinone oxidoreductase subunit N (157 aa).

It belongs to the complex I NdhN subunit family. In terms of assembly, NDH-1 can be composed of about 15 different subunits; different subcomplexes with different compositions have been identified which probably have different functions.

Its subcellular location is the cellular thylakoid membrane. It catalyses the reaction a plastoquinone + NADH + (n+1) H(+)(in) = a plastoquinol + NAD(+) + n H(+)(out). The catalysed reaction is a plastoquinone + NADPH + (n+1) H(+)(in) = a plastoquinol + NADP(+) + n H(+)(out). In terms of biological role, NDH-1 shuttles electrons from an unknown electron donor, via FMN and iron-sulfur (Fe-S) centers, to quinones in the respiratory and/or the photosynthetic chain. The immediate electron acceptor for the enzyme in this species is believed to be plastoquinone. Couples the redox reaction to proton translocation, and thus conserves the redox energy in a proton gradient. Cyanobacterial NDH-1 also plays a role in inorganic carbon-concentration. This Picosynechococcus sp. (strain ATCC 27264 / PCC 7002 / PR-6) (Agmenellum quadruplicatum) protein is NAD(P)H-quinone oxidoreductase subunit N.